Here is a 508-residue protein sequence, read N- to C-terminus: Monocarboxylate transporter 9 (508 aa).

Transmembrane regions (helical) follow at residues Trp-13–Val-33, Trp-53–Val-73, Pro-80–Pro-100, Ile-102–Thr-122, Gly-137–Leu-157, and Phe-164–Cys-184. The segment at Gly-242–Pro-263 is disordered. 6 helical membrane passes run Val-303 to Leu-323, Ile-341 to Leu-361, Leu-370 to Ala-390, Leu-396 to Val-416, Gly-431 to Phe-451, and Ile-460 to Ile-480.

Belongs to the major facilitator superfamily. Monocarboxylate porter (TC 2.A.1.13) family. As to expression, expressed in the liver and kidneys. In the liver localizes on the sinusoidal membrane of the hepatocytes.

It localises to the cell membrane. It carries out the reaction creatine(in) = creatine(out). The catalysed reaction is (R)-carnitine(in) = (R)-carnitine(out). In terms of biological role, extracellular pH-and Na(+)-sensitive low-affinity creatine transporter. Also functions as a pH-independent carnitine efflux transporter. This chain is Monocarboxylate transporter 9 (Slc16a9), found in Rattus norvegicus (Rat).